A 638-amino-acid polypeptide reads, in one-letter code: Paramyosin (638 aa).

The stretch at F1–D638 forms a coiled coil.

It belongs to the paramyosin family. In terms of assembly, homodimer.

The protein localises to the cytoplasm. Its subcellular location is the myofibril. Functionally, paramyosin is a major structural component of many thick filaments isolated from invertebrate muscles. The polypeptide is Paramyosin (Opisthorchis felineus).